Consider the following 1480-residue polypeptide: Nonribosomal peptide synthetase-like enzyme fsqF (1480 aa).

A disordered region spans residues 31–59 (SPFADEPSIDVPSTHLPVVTPRSKTANDR). The tract at residues 132–527 (DSARATPHAP…VGRTDDQVKY (396 aa)) is adenylation domain. Positions 662-741 (STARTIAREY…SIASLIDANS (80 aa)) constitute a Carrier domain. Ser700 carries the O-(pantetheine 4'-phosphoryl)serine modification. A compositionally biased stretch (polar residues) spans 739-754 (ANSSPGRGQPLNTQET). Residues 739–773 (ANSSPGRGQPLNTQETARLPLRSNGPAPSQQALER) form a disordered region. Residues 780–1003 (LTGASGFLGI…ACVELGFYNG (224 aa)) form an NAD-binding domain region. An aminotransferase domain region spans residues 1100-1465 (NAAGTVVHRE…YNTVAEVQEF (366 aa)).

It belongs to the NRP synthetase family.

Its pathway is secondary metabolite biosynthesis. Nonribosomal peptide synthetase-like enzyme; part of the gene cluster that mediates the biosynthesis of the isoquinoline alkaloids fumisoquin A, fumisoquin B and fumisoquin C; as well as small amounts of fumipyrrole as a shunt metabolite. The products of the cluster lead to a brown coloration and are important for growth and conidiation. The nonribosomal peptide synthetase-like protein fsqF, which lacks a canonical condensation domain, is required for addition of a serine-derived dehydroalanine moiety to activated tyrosine but is not essential for the subsequent steps leading to isoquinoline formation. A different enzyme, most likely the ATP-grasp enzyme fsqD, is responsible for activation of tyrosine. Three additional enzymes encoded by the fsq cluster, the N-methyltransferase fsqC, the phenol 2-monooxygenase fsqG and the FAD-dependent oxidase fsqB, catalyze the formation of the isoquinoline ring system in the fumisoquins. FsqB converts the fspF thiolation domain-bound (2S,4S,5S)-2-amino-6-(3,4-dihydroxyphenyl)-4-hydroxy-5-(methylamino)hexanoyl into isoquinoline. The cyclization most likely proceeds via a two-step mechanism, beginning with FAD-dependent oxidation of the methyl group to an iminium species followed by electrophilic attack on the deprotonated phenol. The sequence is that of Nonribosomal peptide synthetase-like enzyme fsqF from Aspergillus fumigatus (strain ATCC MYA-4609 / CBS 101355 / FGSC A1100 / Af293) (Neosartorya fumigata).